A 318-amino-acid polypeptide reads, in one-letter code: Lipoyl synthase (318 aa).

Residues cysteine 64, cysteine 69, cysteine 75, cysteine 90, cysteine 94, cysteine 97, and serine 304 each contribute to the [4Fe-4S] cluster site. The 218-residue stretch at 76-293 folds into the Radical SAM core domain; sequence FSGGTATFMI…AEEGYKMGFK (218 aa).

The protein belongs to the radical SAM superfamily. Lipoyl synthase family. Requires [4Fe-4S] cluster as cofactor.

It localises to the cytoplasm. It carries out the reaction [[Fe-S] cluster scaffold protein carrying a second [4Fe-4S](2+) cluster] + N(6)-octanoyl-L-lysyl-[protein] + 2 oxidized [2Fe-2S]-[ferredoxin] + 2 S-adenosyl-L-methionine + 4 H(+) = [[Fe-S] cluster scaffold protein] + N(6)-[(R)-dihydrolipoyl]-L-lysyl-[protein] + 4 Fe(3+) + 2 hydrogen sulfide + 2 5'-deoxyadenosine + 2 L-methionine + 2 reduced [2Fe-2S]-[ferredoxin]. Its pathway is protein modification; protein lipoylation via endogenous pathway; protein N(6)-(lipoyl)lysine from octanoyl-[acyl-carrier-protein]: step 2/2. Functionally, catalyzes the radical-mediated insertion of two sulfur atoms into the C-6 and C-8 positions of the octanoyl moiety bound to the lipoyl domains of lipoate-dependent enzymes, thereby converting the octanoylated domains into lipoylated derivatives. This is Lipoyl synthase from Pseudomonas syringae pv. tomato (strain ATCC BAA-871 / DC3000).